The chain runs to 345 residues: Ribosome production factor 1 (345 aa).

Disordered regions lie at residues 1–57 and 70–105; these read MAKA…ISEI and WKQQ…PKTI. Residues 87–97 are compositionally biased toward basic and acidic residues; sequence REREALGDKAP. Positions 142 to 325 constitute a Brix domain; it reads PKILITTSDR…LRSLQKGTFD (184 aa). Positions 303-320 are RNA-binding; it reads VGIQELGPRFTLKLRSLQ.

The protein localises to the nucleus. It is found in the nucleolus. In terms of biological role, may be required for ribosome biogenesis. This Rattus norvegicus (Rat) protein is Ribosome production factor 1 (Rpf1).